A 639-amino-acid polypeptide reads, in one-letter code: 1-deoxy-D-xylulose-5-phosphate synthase 1 (639 aa).

Residues histidine 79 and 120–122 (AHS) contribute to the thiamine diphosphate site. Aspartate 155 serves as a coordination point for Mg(2+). Residues 156-157 (GA), asparagine 184, tyrosine 293, and glutamate 373 each bind thiamine diphosphate. Asparagine 184 provides a ligand contact to Mg(2+).

It belongs to the transketolase family. DXPS subfamily. Homodimer. The cofactor is Mg(2+). It depends on thiamine diphosphate as a cofactor.

The enzyme catalyses D-glyceraldehyde 3-phosphate + pyruvate + H(+) = 1-deoxy-D-xylulose 5-phosphate + CO2. It functions in the pathway metabolic intermediate biosynthesis; 1-deoxy-D-xylulose 5-phosphate biosynthesis; 1-deoxy-D-xylulose 5-phosphate from D-glyceraldehyde 3-phosphate and pyruvate: step 1/1. Its function is as follows. Catalyzes the acyloin condensation reaction between C atoms 2 and 3 of pyruvate and glyceraldehyde 3-phosphate to yield 1-deoxy-D-xylulose-5-phosphate (DXP). In Jannaschia sp. (strain CCS1), this protein is 1-deoxy-D-xylulose-5-phosphate synthase 1.